The following is a 364-amino-acid chain: UDP-N-acetylglucosamine--N-acetylmuramyl-(pentapeptide) pyrophosphoryl-undecaprenol N-acetylglucosamine transferase (364 aa).

Residues 15-17 (TGG), Asn123, Arg164, Ser191, and Gln286 each bind UDP-N-acetyl-alpha-D-glucosamine.

This sequence belongs to the glycosyltransferase 28 family. MurG subfamily.

It is found in the cell inner membrane. The catalysed reaction is di-trans,octa-cis-undecaprenyl diphospho-N-acetyl-alpha-D-muramoyl-L-alanyl-D-glutamyl-meso-2,6-diaminopimeloyl-D-alanyl-D-alanine + UDP-N-acetyl-alpha-D-glucosamine = di-trans,octa-cis-undecaprenyl diphospho-[N-acetyl-alpha-D-glucosaminyl-(1-&gt;4)]-N-acetyl-alpha-D-muramoyl-L-alanyl-D-glutamyl-meso-2,6-diaminopimeloyl-D-alanyl-D-alanine + UDP + H(+). It functions in the pathway cell wall biogenesis; peptidoglycan biosynthesis. Cell wall formation. Catalyzes the transfer of a GlcNAc subunit on undecaprenyl-pyrophosphoryl-MurNAc-pentapeptide (lipid intermediate I) to form undecaprenyl-pyrophosphoryl-MurNAc-(pentapeptide)GlcNAc (lipid intermediate II). This is UDP-N-acetylglucosamine--N-acetylmuramyl-(pentapeptide) pyrophosphoryl-undecaprenol N-acetylglucosamine transferase from Prochlorococcus marinus subsp. pastoris (strain CCMP1986 / NIES-2087 / MED4).